Here is a 292-residue protein sequence, read N- to C-terminus: 4-hydroxy-tetrahydrodipicolinate synthase (292 aa).

Thr-45 contacts pyruvate. Tyr-133 functions as the Proton donor/acceptor in the catalytic mechanism. Lys-161 serves as the catalytic Schiff-base intermediate with substrate. Ile-203 lines the pyruvate pocket.

It belongs to the DapA family. Homotetramer; dimer of dimers.

Its subcellular location is the cytoplasm. The enzyme catalyses L-aspartate 4-semialdehyde + pyruvate = (2S,4S)-4-hydroxy-2,3,4,5-tetrahydrodipicolinate + H2O + H(+). It functions in the pathway amino-acid biosynthesis; L-lysine biosynthesis via DAP pathway; (S)-tetrahydrodipicolinate from L-aspartate: step 3/4. Its function is as follows. Catalyzes the condensation of (S)-aspartate-beta-semialdehyde [(S)-ASA] and pyruvate to 4-hydroxy-tetrahydrodipicolinate (HTPA). The polypeptide is 4-hydroxy-tetrahydrodipicolinate synthase (Vibrio cholerae serotype O1 (strain M66-2)).